A 107-amino-acid chain; its full sequence is MTDQINKLDPDTAIDIAYDIFLEMAGENLDPADIILFNLQFEDHGGVEFVETADDWEQEIGVLIDPDEYAEVWVGLVNEQDEMDDIFAKFLISHKEEDREYHVVWKK.

It belongs to the putative dsDNA mimic protein family.

May act as a double-stranded DNA (dsDNA) mimic. Probably regulates the activity of a dsDNA-binding protein. The polypeptide is Putative double-stranded DNA mimic protein HSM_1473 (Histophilus somni (strain 2336) (Haemophilus somnus)).